We begin with the raw amino-acid sequence, 90 residues long: UPF0367 protein P9301_01411 (90 aa).

It belongs to the UPF0367 family.

This chain is UPF0367 protein P9301_01411, found in Prochlorococcus marinus (strain MIT 9301).